The following is a 727-amino-acid chain: Protein EXECUTER 1, chloroplastic (727 aa).

Disordered regions lie at residues 1 to 51, 65 to 102, 340 to 381, and 413 to 455; these read MAAA…SRLF, LAGA…AGSG, ISSS…LPSD, and DEDD…SGDE. Residues 1–83 constitute a chloroplast transit peptide; the sequence is MAAAVSTAPR…PRRRVSSVVR (83 aa). Low complexity-rich tracts occupy residues 19–33 and 42–51; these read SSSC…ASMS and PSSGSGSRLF. Over residues 413–441 the composition is skewed to acidic residues; that stretch reads DEDDENDNPEDEIESSEDIGDGDNVEEAE.

Its subcellular location is the plastid. It localises to the chloroplast. In terms of biological role, together with EX2, enables higher plants to perceive singlet oxygen as a stress signal in plastid that activates a genetically determined nuclear stress response program which triggers a programmed cell death (PCD). This transfer of singlet oxygen-induced stress-related signals from the plastid to the nucleus that triggers genetically controlled PCD pathway is unique to photosynthetic eukaryotes and operates under mild stress conditions, impeding photosystem II (PSII) without causing photooxidative damage of the plant. The protein is Protein EXECUTER 1, chloroplastic of Oryza sativa subsp. japonica (Rice).